A 162-amino-acid chain; its full sequence is NADH-quinone oxidoreductase subunit I (162 aa).

4Fe-4S ferredoxin-type domains lie at 52–82 and 93–122; these read LRRY…IEAG and TRYD…EGPN. [4Fe-4S] cluster is bound by residues cysteine 62, cysteine 65, cysteine 68, cysteine 72, cysteine 102, cysteine 105, cysteine 108, and cysteine 112.

Belongs to the complex I 23 kDa subunit family. In terms of assembly, NDH-1 is composed of 14 different subunits. Subunits NuoA, H, J, K, L, M, N constitute the membrane sector of the complex. Requires [4Fe-4S] cluster as cofactor.

Its subcellular location is the cell inner membrane. It catalyses the reaction a quinone + NADH + 5 H(+)(in) = a quinol + NAD(+) + 4 H(+)(out). In terms of biological role, NDH-1 shuttles electrons from NADH, via FMN and iron-sulfur (Fe-S) centers, to quinones in the respiratory chain. The immediate electron acceptor for the enzyme in this species is believed to be ubiquinone. Couples the redox reaction to proton translocation (for every two electrons transferred, four hydrogen ions are translocated across the cytoplasmic membrane), and thus conserves the redox energy in a proton gradient. This Beijerinckia indica subsp. indica (strain ATCC 9039 / DSM 1715 / NCIMB 8712) protein is NADH-quinone oxidoreductase subunit I.